We begin with the raw amino-acid sequence, 118 residues long: Eukaryotic translation initiation factor 4E-binding protein 1 (118 aa).

N-acetylserine is present on Ser2. The tract at residues 27-48 (VQLPPGDYSTTPGGTLFSTTPG) is disordered. Polar residues predominate over residues 34–48 (YSTTPGGTLFSTTPG). A Phosphothreonine; by MTOR modification is found at Thr37. Thr41 carries the phosphothreonine modification. The residue at position 44 (Ser44) is a Phosphoserine. A Phosphothreonine; by MTOR modification is found at Thr46. Position 50 is a phosphothreonine (Thr50). The residue at position 54 (Tyr54) is a Phosphotyrosine. The YXXXXLphi motif signature appears at 54-60 (YDRKFLM). Lys57 participates in a covalent cross-link: Glycyl lysine isopeptide (Lys-Gly) (interchain with G-Cter in ubiquitin). A disordered region spans residues 64–118 (NSPVTKTPPRDLPTIPGVTSPTGDEPPTEARQNHLRSSPEDKPAGGEESQFEMDI). Ser65 is subject to Phosphoserine; by DYRK2, MAPK1, MAPK3 and MTOR. Thr70 carries the phosphothreonine; by MTOR modification. Phosphothreonine is present on Thr77. 2 positions are modified to phosphoserine: Ser83 and Ser100. Ser101 carries the post-translational modification Phosphoserine; by DYRK2. Phosphoserine is present on Ser112. A TOS motif motif is present at residues 114-118 (FEMDI).

This sequence belongs to the eIF4E-binding protein family. As to quaternary structure, hypophosphorylated EIF4EBP1 competes with EIF4G1/EIF4G3 to interact with EIF4E; insulin stimulated MAP-kinase (MAPK1 and MAPK3) or mTORC1 phosphorylation of EIF4EBP1 causes dissociation of the complex allowing EIF4G1/EIF4G3 to bind and consequent initiation of translation. Interacts (via TOS motif) with RPTOR; promoting phosphorylation by mTORC1. Phosphorylated on serine and threonine residues in response to insulin, EGF and PDGF. Phosphorylation at Thr-37, Thr-46, Ser-65 and Thr-70, corresponding to the hyperphosphorylated form, is regulated by mTORC1 and abolishes binding to EIF4E. Post-translationally, ubiquitinated: when eIF4E levels are low, hypophosphorylated form is ubiquitinated by the BCR(KLHL25) complex, leading to its degradation and serving as a homeostatic mechanism to maintain translation and prevent eIF4E inhibition when eIF4E levels are low. Not ubiquitinated when hyperphosphorylated (at Thr-37, Thr-46, Ser-65 and Thr-70) or associated with eIF4E.

It is found in the cytoplasm. The protein resides in the nucleus. Repressor of translation initiation that regulates EIF4E activity by preventing its assembly into the eIF4F complex: hypophosphorylated form competes with EIF4G1/EIF4G3 and strongly binds to EIF4E, leading to repress translation. In contrast, hyperphosphorylated form dissociates from EIF4E, allowing interaction between EIF4G1/EIF4G3 and EIF4E, leading to initiation of translation. Mediates the regulation of protein translation by hormones, growth factors and other stimuli that signal through the MAP kinase and mTORC1 pathways. The chain is Eukaryotic translation initiation factor 4E-binding protein 1 (EIF4EBP1) from Bos taurus (Bovine).